The primary structure comprises 288 residues: Undecaprenyl-diphosphatase (288 aa).

8 helical membrane passes run 25–45 (GITE…NEFL), 53–73 (FIDM…MVIY), 93–113 (WKLW…GLLL), 121–141 (LSNF…FIWI), 171–191 (VLSI…GIIV), 196–216 (SVAA…YSGL), 231–251 (GQAA…LFVI), and 263–283 (FTVF…YGAV).

The protein belongs to the UppP family.

The protein resides in the cell membrane. The enzyme catalyses di-trans,octa-cis-undecaprenyl diphosphate + H2O = di-trans,octa-cis-undecaprenyl phosphate + phosphate + H(+). Functionally, catalyzes the dephosphorylation of undecaprenyl diphosphate (UPP). Confers resistance to bacitracin. This chain is Undecaprenyl-diphosphatase, found in Streptococcus thermophilus (strain CNRZ 1066).